A 326-amino-acid polypeptide reads, in one-letter code: Biotin synthase (326 aa).

One can recognise a Radical SAM core domain in the interval 41–271; the sequence is YHVQLASLLS…EARVRLSAGR (231 aa). [4Fe-4S] cluster-binding residues include C56, C60, and C63. [2Fe-2S] cluster is bound by residues C102, C134, C194, and R266.

The protein belongs to the radical SAM superfamily. Biotin synthase family. As to quaternary structure, homodimer. [4Fe-4S] cluster is required as a cofactor. The cofactor is [2Fe-2S] cluster.

The enzyme catalyses (4R,5S)-dethiobiotin + (sulfur carrier)-SH + 2 reduced [2Fe-2S]-[ferredoxin] + 2 S-adenosyl-L-methionine = (sulfur carrier)-H + biotin + 2 5'-deoxyadenosine + 2 L-methionine + 2 oxidized [2Fe-2S]-[ferredoxin]. It functions in the pathway cofactor biosynthesis; biotin biosynthesis; biotin from 7,8-diaminononanoate: step 2/2. In terms of biological role, catalyzes the conversion of dethiobiotin (DTB) to biotin by the insertion of a sulfur atom into dethiobiotin via a radical-based mechanism. The chain is Biotin synthase from Synechococcus sp. (strain RCC307).